We begin with the raw amino-acid sequence, 70 residues long: DNA-directed RNA polymerase subunit omega (70 aa).

This sequence belongs to the RNA polymerase subunit omega family. In terms of assembly, the RNAP catalytic core consists of 2 alpha, 1 beta, 1 beta' and 1 omega subunit. When a sigma factor is associated with the core the holoenzyme is formed, which can initiate transcription.

It carries out the reaction RNA(n) + a ribonucleoside 5'-triphosphate = RNA(n+1) + diphosphate. Its function is as follows. Promotes RNA polymerase assembly. Latches the N- and C-terminal regions of the beta' subunit thereby facilitating its interaction with the beta and alpha subunits. In Bacillus mycoides (strain KBAB4) (Bacillus weihenstephanensis), this protein is DNA-directed RNA polymerase subunit omega.